The following is a 361-amino-acid chain: UDP-3-O-acylglucosamine N-acyltransferase (361 aa).

His258 acts as the Proton acceptor in catalysis.

It belongs to the transferase hexapeptide repeat family. LpxD subfamily. As to quaternary structure, homotrimer.

It carries out the reaction a UDP-3-O-[(3R)-3-hydroxyacyl]-alpha-D-glucosamine + a (3R)-hydroxyacyl-[ACP] = a UDP-2-N,3-O-bis[(3R)-3-hydroxyacyl]-alpha-D-glucosamine + holo-[ACP] + H(+). The protein operates within bacterial outer membrane biogenesis; LPS lipid A biosynthesis. Catalyzes the N-acylation of UDP-3-O-acylglucosamine using 3-hydroxyacyl-ACP as the acyl donor. Is involved in the biosynthesis of lipid A, a phosphorylated glycolipid that anchors the lipopolysaccharide to the outer membrane of the cell. This is UDP-3-O-acylglucosamine N-acyltransferase from Nitrobacter hamburgensis (strain DSM 10229 / NCIMB 13809 / X14).